The chain runs to 465 residues: UPF0324 membrane protein CC_0425 (465 aa).

Positions 97 to 132 (HRQPDRAPPARASEQPLRQGRRALRRRPDQRRHRPR) are disordered. The span at 115 to 132 (QGRRALRRRPDQRRHRPR) shows a compositional bias: basic residues. 10 consecutive transmembrane segments (helical) span residues 135–157 (AAALRLGAARIGPGLLAGLLMAV), 172–194 (LLAVVLGMMLGALGLQGQLGAGL), 219–241 (AALGGPAVLASGAVVLGGLGIGA), 251–273 (LAEALIAAAACSICGASAALAAS), 286–308 (TALVIVGVNLLSTVAMLAYPPIA), 318–340 (AGVFFGLSIHDVAQVAGAGASVS), 352–374 (LSRILWLGPAVVLIGLMLTRTAQ), 378–400 (ISGLQAPPLFVWGFAALAAARGL), 405–427 (PALVSALGACSGFLLLAGVGAIS), and 442–464 (LAILLVTLTVAVAILAYALTRIF).

This sequence belongs to the UPF0324 family.

Its subcellular location is the cell membrane. The polypeptide is UPF0324 membrane protein CC_0425 (Caulobacter vibrioides (strain ATCC 19089 / CIP 103742 / CB 15) (Caulobacter crescentus)).